Here is a 274-residue protein sequence, read N- to C-terminus: Undecaprenyl-diphosphatase (274 aa).

7 consecutive transmembrane segments (helical) span residues 4 to 24 (ILLL…FLPI), 46 to 63 (LFEI…VWEY), 82 to 102 (KFIL…LAFG), 109 to 129 (LFNP…ILWA), 184 to 204 (ATEF…FYQL), 218 to 238 (MWAV…RWLL), and 249 to 269 (FAWY…FGWV).

It belongs to the UppP family.

It is found in the cell inner membrane. It carries out the reaction di-trans,octa-cis-undecaprenyl diphosphate + H2O = di-trans,octa-cis-undecaprenyl phosphate + phosphate + H(+). Its function is as follows. Catalyzes the dephosphorylation of undecaprenyl diphosphate (UPP). Confers resistance to bacitracin. This Dechloromonas aromatica (strain RCB) protein is Undecaprenyl-diphosphatase.